Consider the following 486-residue polypeptide: Probable transporter MCH1 (486 aa).

12 helical membrane passes run 31–51 (IFALSILGTLSAASISLFSMY), 68–88 (SVSISSLLGMYLLMPVIGYLG), 95–115 (YLALFSWITFPASYSIASGIF), 135–155 (EMALCFFFIGASTSCMYYASL), 174–194 (TYTPGYAIWGPVAAFGLSSLW), 211–231 (VAGIFLFFAGLYAVICGIIFF), 268–288 (FFTDKTAWLFLLCFVFIGGPF), 312–333 (FSTHVSLFATFSTVSRLVVGFS), 349–369 (VIALVAACIHLMVPSGIFTVF), 377–397 (VVTIVNGFSYGSSFTLVPTIV), 409–429 (IWGSFILALAVGSLGYGLLFA), and 457–477 (FVITGTGLAFAAAAVFFIWVF).

Belongs to the major facilitator superfamily.

The protein resides in the vacuole membrane. Its function is as follows. Probable transporter. The chain is Probable transporter MCH1 (MCH1) from Yarrowia lipolytica (strain CLIB 122 / E 150) (Yeast).